Here is a 152-residue protein sequence, read N- to C-terminus: Putative toxin MJ1304 (152 aa).

In terms of domain architecture, HEPN spans 15-135 (IKRAEEDLEV…EECLKDAENV (121 aa)).

Putative toxin component of a putative type VII toxin-antitoxin (TA) system. Its cognate antitoxin might be MJ1305. In Methanocaldococcus jannaschii (strain ATCC 43067 / DSM 2661 / JAL-1 / JCM 10045 / NBRC 100440) (Methanococcus jannaschii), this protein is Putative toxin MJ1304.